The primary structure comprises 79 residues: Omega-phylotoxin-To1a (79 aa).

Positions 1-21 are cleaved as a signal peptide; sequence MKKTFCFILILVCIVLKSVNA. The propeptide occupies 22–38; sequence EEEDNFEESSLEMETAR. 4 cysteine pairs are disulfide-bonded: C39/C59, C46/C63, C58/C78, and C65/C76.

In terms of tissue distribution, expressed by the venom duct.

The protein resides in the secreted. Insect-specific toxin that probably acts as an inhibitor of presynaptic insect calcium channels, presumably Cav2 subtype. In vivo, induces immediate paralysis on insects, followed by death when high doses are injected. The protein is Omega-phylotoxin-To1a of Tibellus oblongus (Oblong running crab spider).